The chain runs to 107 residues: Prepilin peptidase-dependent protein C (107 aa).

The propeptide occupies 1-10 (MSASLKNQQG). At phenylalanine 11 the chain carries N-methylphenylalanine. The helical transmembrane segment at 11 to 30 (FSLPEVMLAMVLMVMIVTAL) threads the bilayer.

It is found in the membrane. Not yet known. This chain is Prepilin peptidase-dependent protein C (ppdC), found in Escherichia coli (strain K12).